Reading from the N-terminus, the 237-residue chain is MFVFILLSLAAVLQQSFGNVDFNSESPRIKAKQREIVDKHNAFRRSVRPTASNMLRMEWYSEAASNAERWAYRCILDHSPKTSRILNGIKCGENIYMSSIPMTWIDIIKLWHDEYKNFIYGVGANPPGSVIGHYTQIVWYKSYRVGCAASYCPPSSYNYFYVCQYCPAGNFAGLTATPYKSGPTCGDCPSACDNGLCTNPCSREDVFMNCKSLVAQSNCQDDYIRKNCPATCFCPNK.

An N-terminal signal peptide occupies residues 1-18 (MFVFILLSLAAVLQQSFG). Positions 37–165 (VDKHNAFRRS…SYNYFYVCQY (129 aa)) constitute an SCP domain. 7 cysteine pairs are disulfide-bonded: Cys74-Cys152, Cys91-Cys166, Cys147-Cys163, Cys185-Cys192, Cys188-Cys197, Cys201-Cys234, and Cys219-Cys232. In terms of domain architecture, ShKT spans 201 to 234 (CSREDVFMNCKSLVAQSNCQDDYIRKNCPATCFC).

It belongs to the CRISP family. As to expression, expressed by the venom gland.

It localises to the secreted. In terms of biological role, weakly blocks contraction of smooth muscle elicited by high potassium-induced depolarization, but does not block caffeine-stimulated contraction. May target voltage-gated calcium channels on smooth muscle. The chain is Cysteine-rich venom protein DIS1 from Dispholidus typus (Boomslang).